The primary structure comprises 763 residues: Phosphoglycerol transferase I (763 aa).

Helical transmembrane passes span 1-21 (MSEL…AWKA), 26-46 (WWFA…ITLY), 77-97 (ILPG…LGWI), and 108-128 (VGYS…SPAF).

It belongs to the OpgB family.

It is found in the cell inner membrane. The enzyme catalyses a phosphatidylglycerol + a membrane-derived-oligosaccharide D-glucose = a 1,2-diacyl-sn-glycerol + a membrane-derived-oligosaccharide 6-(glycerophospho)-D-glucose.. It functions in the pathway glycan metabolism; osmoregulated periplasmic glucan (OPG) biosynthesis. Its function is as follows. Transfers a phosphoglycerol residue from phosphatidylglycerol to the membrane-bound nascent glucan backbones. In Salmonella agona (strain SL483), this protein is Phosphoglycerol transferase I.